The chain runs to 106 residues: Protein translation factor SUI1 homolog (106 aa).

This sequence belongs to the SUI1 family.

This chain is Protein translation factor SUI1 homolog, found in Methanopyrus kandleri (strain AV19 / DSM 6324 / JCM 9639 / NBRC 100938).